Here is a 322-residue protein sequence, read N- to C-terminus: Mas-related G-protein coupled receptor member X1 (322 aa).

At 1 to 31 (MDPTISTLDTELTPINGTEETLCYKQTLSLT) the chain is on the extracellular side. The N-linked (GlcNAc...) asparagine glycan is linked to asparagine 16. The chain crosses the membrane as a helical span at residues 32–52 (VLTCIVSLVGLTGNAVVLWLL). The Cytoplasmic portion of the chain corresponds to 53-67 (GCRMRRNAFSIYILN). A helical transmembrane segment spans residues 68–88 (LAAADFLFLSGRLIYSLLSFI). Topologically, residues 89–96 (SIPHTISK) are extracellular. A helical membrane pass occupies residues 97–117 (ILYPVMMFSYFAGLSFLSAVS). At 118-144 (TERCLSVLWPIWYRCHRPTHLSAVVCV) the chain is on the cytoplasmic side. Residues 145–165 (LLWALSLLRSILEWMLCGFLF) form a helical membrane-spanning segment. Residues 166-177 (SGADSAWCQTSD) lie on the Extracellular side of the membrane. A helical membrane pass occupies residues 178-198 (FITVAWLIFLCVVLCGSSLVL). Over 199–221 (LIRILCGSRKIPLTRLYVTILLT) the chain is Cytoplasmic. Residues 222–242 (VLVFLLCGLPFGIQFFLFLWI) form a helical membrane-spanning segment. At 243–254 (HVDREVLFCHVH) the chain is on the extracellular side. Residues 255–275 (LVSIFLSALNSSANPIIYFFV) traverse the membrane as a helical segment. Residues 276-322 (GSFRQRQNRQNLKLVLQRALQDASEVDEGGGQLPEEILELSGSRLEQ) are Cytoplasmic-facing.

It belongs to the G-protein coupled receptor 1 family. Mas subfamily. In terms of tissue distribution, uniquely localized in a subset of small dorsal root and trigeminal sensory neurons.

Its subcellular location is the cell membrane. Its function is as follows. Orphan receptor. Probably involved in the function of nociceptive neurons. May regulate nociceptor function and/or development, including the sensation or modulation of pain. Potently activated by enkephalins including BAM22 (bovine adrenal medulla peptide 22) and BAM (8-22). BAM22 is the most potent compound and evoked a large and dose-dependent release of intracellular calcium in stably transfected cells. G(alpha)q proteins are involved in the calcium-signaling pathway. Activated by the antimalarial drug, chloroquine. May mediate chloroquine-induced itch, in a histamine-independent manner. This is Mas-related G-protein coupled receptor member X1 (MRGPRX1) from Homo sapiens (Human).